Reading from the N-terminus, the 150-residue chain is Endoribonuclease YbeY (150 aa).

His113, His117, and His123 together coordinate Zn(2+).

It belongs to the endoribonuclease YbeY family. Requires Zn(2+) as cofactor.

The protein localises to the cytoplasm. Single strand-specific metallo-endoribonuclease involved in late-stage 70S ribosome quality control and in maturation of the 3' terminus of the 16S rRNA. In Wolbachia sp. subsp. Drosophila simulans (strain wRi), this protein is Endoribonuclease YbeY.